The sequence spans 99 residues: Large ribosomal subunit protein uL23 (99 aa).

The protein belongs to the universal ribosomal protein uL23 family. In terms of assembly, part of the 50S ribosomal subunit. Contacts protein L29, and trigger factor when it is bound to the ribosome.

One of the early assembly proteins it binds 23S rRNA. One of the proteins that surrounds the polypeptide exit tunnel on the outside of the ribosome. Forms the main docking site for trigger factor binding to the ribosome. The sequence is that of Large ribosomal subunit protein uL23 from Stenotrophomonas maltophilia (strain R551-3).